Here is a 417-residue protein sequence, read N- to C-terminus: Ribonucleoside-diphosphate reductase small chain (417 aa).

Fe cation-binding residues include D168, E199, and H202. The active site involves Y206. Residues E261, E297, and H300 each coordinate Fe cation.

This sequence belongs to the ribonucleoside diphosphate reductase small chain family. Heterotetramer composed of a homodimer of the large subunit (R1) and a homodimer of the small subunit (R2). Larger multisubunit protein complex are also active, composed of (R1)n(R2)n. It depends on Fe cation as a cofactor.

The catalysed reaction is a 2'-deoxyribonucleoside 5'-diphosphate + [thioredoxin]-disulfide + H2O = a ribonucleoside 5'-diphosphate + [thioredoxin]-dithiol. In terms of biological role, ribonucleoside-diphosphate reductase holoenzyme provides the precursors necessary for viral DNA synthesis. Allows virus growth in non-dividing cells. Catalyzes the biosynthesis of deoxyribonucleotides from the corresponding ribonucleotides. The sequence is that of Ribonucleoside-diphosphate reductase small chain (RNR2) from Acanthamoeba polyphaga mimivirus (APMV).